The primary structure comprises 169 residues: Superoxide dismutase [Cu-Zn] 1 (169 aa).

The signal sequence occupies residues 1-18 (MFEQWDALCAVLFSFSIA). Cu cation-binding residues include His-65, His-67, and His-83. Cysteines 72 and 165 form a disulfide. Positions 83, 91, 100, and 103 each coordinate Zn(2+). Position 145 (His-145) interacts with Cu cation.

It belongs to the Cu-Zn superoxide dismutase family. Cu cation is required as a cofactor. Requires Zn(2+) as cofactor.

It catalyses the reaction 2 superoxide + 2 H(+) = H2O2 + O2. Functionally, destroys radicals which are normally produced within the cells and which are toxic to biological systems. This is Superoxide dismutase [Cu-Zn] 1 (sodC1) from Aquifex aeolicus (strain VF5).